A 396-amino-acid chain; its full sequence is MSVRLVLAKGREKSLLRRHPWVFSGAVARMEGKASLGETIDIVDHQGKWLARGAYSPASQIRARVWTFDPSESIDIAFFSRRLQQAQKWRDWLAQKDGLDSYRLIAGESDGLPGITIDRFGNFLVLQLLSAGAEYQRAALISALQTLYPECAIYDRSDVAVRKKEGMELTQGLVTGELPPALLPIEEHGMKLLVDIHHGHKTAYYLDQRDSRLATRRYVENKRVLNCFSYTGGFAVSALMGGCSQVVSVDTSQEALDIARQNVELNKLDLSKAEFVRDDVFKLLRTYRDRGEKFDVIVMDPPKFVENKSQLMGACRGYKDINMLAIQLLNEGGILLTFSCSGLMTSDLFQKIIADAAIDAGRDVQFIEQFRQAADHPVIATYPEGLYLKGFACRVM.

The PUA domain maps to 2-81 (SVRLVLAKGR…ESIDIAFFSR (80 aa)).

It belongs to the methyltransferase superfamily. RlmI family.

It localises to the cytoplasm. It carries out the reaction cytidine(1962) in 23S rRNA + S-adenosyl-L-methionine = 5-methylcytidine(1962) in 23S rRNA + S-adenosyl-L-homocysteine + H(+). Specifically methylates the cytosine at position 1962 (m5C1962) of 23S rRNA. The polypeptide is Ribosomal RNA large subunit methyltransferase I (Shigella flexneri serotype 5b (strain 8401)).